A 441-amino-acid polypeptide reads, in one-letter code: Adenylyltransferase and sulfurtransferase MOCS3 (441 aa).

ATP contacts are provided by residues glycine 83, aspartate 104, 111 to 115 (TNLHR), lysine 128, and 172 to 173 (DN). Positions 213 and 216 each coordinate Zn(2+). Residue cysteine 230 is the Glycyl thioester intermediate; for adenylyltransferase activity of the active site. 2 residues coordinate Zn(2+): cysteine 288 and cysteine 291. The Rhodanese domain maps to 339-439 (AGRDHLLVDV…WTKTIDPNFP (101 aa)). Catalysis depends on cysteine 395, which acts as the Cysteine persulfide intermediate; for sulfurtransferase activity.

It in the N-terminal section; belongs to the HesA/MoeB/ThiF family. UBA4 subfamily. It depends on Zn(2+) as a cofactor.

Its subcellular location is the cytoplasm. It catalyses the reaction [molybdopterin-synthase sulfur-carrier protein]-C-terminal Gly-Gly + ATP + H(+) = [molybdopterin-synthase sulfur-carrier protein]-C-terminal Gly-Gly-AMP + diphosphate. The catalysed reaction is [molybdopterin-synthase sulfur-carrier protein]-C-terminal Gly-Gly-AMP + S-sulfanyl-L-cysteinyl-[cysteine desulfurase] + AH2 = [molybdopterin-synthase sulfur-carrier protein]-C-terminal-Gly-aminoethanethioate + L-cysteinyl-[cysteine desulfurase] + A + AMP + 2 H(+). It participates in tRNA modification; 5-methoxycarbonylmethyl-2-thiouridine-tRNA biosynthesis. It functions in the pathway cofactor biosynthesis; molybdopterin biosynthesis. In terms of biological role, plays a central role in 2-thiolation of mcm(5)S(2)U at tRNA wobble positions of cytosolic tRNA(Lys), tRNA(Glu) and tRNA(Gln). Also essential during biosynthesis of the molybdenum cofactor. Acts by mediating the C-terminal thiocarboxylation of sulfur carriers URM1 and MOCS2A. Its N-terminus first activates URM1 and MOCS2A as acyl-adenylates (-COAMP), then the persulfide sulfur on the catalytic cysteine is transferred to URM1 and MOCS2A to form thiocarboxylation (-COSH) of their C-terminus. The reaction probably involves hydrogen sulfide that is generated from the persulfide intermediate and that acts as a nucleophile towards URM1 and MOCS2A. Subsequently, a transient disulfide bond is formed. Does not use thiosulfate as sulfur donor; NFS1 probably acting as a sulfur donor for thiocarboxylation reactions. This is Adenylyltransferase and sulfurtransferase MOCS3 from Anopheles gambiae (African malaria mosquito).